The chain runs to 306 residues: Pantothenate kinase (306 aa).

91 to 98 (GSVAVGKS) contacts ATP.

Belongs to the prokaryotic pantothenate kinase family.

The protein localises to the cytoplasm. The catalysed reaction is (R)-pantothenate + ATP = (R)-4'-phosphopantothenate + ADP + H(+). It participates in cofactor biosynthesis; coenzyme A biosynthesis; CoA from (R)-pantothenate: step 1/5. In Streptococcus pyogenes serotype M49 (strain NZ131), this protein is Pantothenate kinase.